A 482-amino-acid polypeptide reads, in one-letter code: uncharacterized protein (482 aa).

2 WD repeats span residues 92 to 133 (DMPN…REPI) and 191 to 230 (GHEH…CLCK).

The protein localises to the cytoplasm. Its subcellular location is the nucleus. This is an uncharacterized protein from Schizosaccharomyces pombe (strain 972 / ATCC 24843) (Fission yeast).